The primary structure comprises 483 residues: Prenyltransferase vrtC (483 aa).

Belongs to the tryptophan dimethylallyltransferase family.

The protein operates within secondary metabolite biosynthesis; terpenoid biosynthesis. In terms of biological role, prenyltransferase; part of the gene cluster that mediates the biosynthesis of viridicatumtoxin, a tetracycline-like fungal meroterpenoid with a unique, fused spirobicyclic ring system. The first step of the pathway is the production of the malonamoyl-CoA starter unit for the polyketide synthase vrtA. The aldolase vrtJ may be involved in the synthesis of the malonamate substrate for malonamoyl-CoA synthetase vrtB. The polyketide synthase vrtA then may utilize the malonamoyl-CoA starter unit, followed by sequential condensation of eight malonyl-CoA units to form the polyketide backbone. The cyclization of the last ring could be mediated by the lactamase-like protein vrtG. The proposed post-PKS tailoring steps are a hydroxylation at C5 catalyzed the cytochrome P450 monooxygenase vrtE, a hydroxylation at C12a catalyzed by VrtH and/or VrtI, and an O-methylation by the O-methyltransferase vrtF. VrtC is then proposed to catalyze the transfer of a geranyl group synthesized by vrtD to the aromatic C ring of the tetracyclic polyketide intermediate of viridicatumtoxin to yield previridicatumtoxin. Finally, the cytochrome P450 monooxygenase vrtK catalyzes the spirocyclization of the geranyl moiety of previridicatumtoxin to afford viridicatumtoxin. In Penicillium aethiopicum, this protein is Prenyltransferase vrtC.